The sequence spans 229 residues: Secreted RxLR effector protein PITG_22926 (229 aa).

The first 23 residues, 1 to 23 (MRCNHTLCVVAITFLVSWSQTLS), serve as a signal peptide directing secretion. Positions 34–45 (PLVRSVSATEER) match the RxLR-dEER motif.

Belongs to the RxLR effector family.

It localises to the secreted. The protein localises to the host nucleus. Functionally, secreted effector that acts as a RNA silencing suppressor, probably by inhibiting the biogenesis of small RNAs in the host plant, to manipulate host immune responses and promote Phytophthora infection. The sequence is that of Secreted RxLR effector protein PITG_22926 from Phytophthora infestans (strain T30-4) (Potato late blight agent).